The following is a 713-amino-acid chain: Vacuolar amino acid transporter 4 (713 aa).

The interval 1 to 33 (MVTNNGDGEHLGIRRNGNLRHPSNNMKIPRRAQ) is disordered. Residues 1 to 242 (MVTNNGDGEH…IDKVPFLTRN (242 aa)) are Vacuolar-facing. Polar residues predominate over residues 21-33 (HPSNNMKIPRRAQ). Phosphoserine is present on Ser-88. The interval 99 to 121 (RSSVSHGNEAIPRVNPTKNSSAS) is disordered. Phosphoserine is present on residues Ser-130 and Ser-165. The tract at residues 200-233 (KRQEHQLNDSASSDFTSHESDSINQSSPSSNQDI) is disordered. The segment covering 221–231 (SINQSSPSSNQ) has biased composition (low complexity). The helical transmembrane segment at 243–263 (FLEFLYVFGHFAGESFEDDFI) threads the bilayer. At 264 to 301 (PDSSNMMIRGEDERSALLSRPDHMKVLPSAKGTTSTKK) the chain is on the cytoplasmic side. Residues 302-322 (VFLILLKSFIGTGVLFLPNAF) form a helical membrane-spanning segment. Over 323–326 (HNGG) the chain is Vacuolar. A helical membrane pass occupies residues 327 to 347 (LFFSVSMLAFFGIYSYWCYYI). Topologically, residues 348–373 (LVQAKSSCGVSSFGDIGLKLYGPWMR) are cytoplasmic. A helical transmembrane segment spans residues 374 to 394 (IIILFSLVITQVGFSGAYMIF). The Vacuolar portion of the chain corresponds to 395-410 (TAKNLQAFLDNVFHVG). The helical transmembrane segment at 411–431 (VLPLSYLMVFQTIIFIPLSFI) threads the bilayer. Topologically, residues 432–438 (RNISKLS) are cytoplasmic. A helical membrane pass occupies residues 439 to 459 (LPSLLANFFIMAGLVIVIIFT). The Vacuolar segment spans residues 460–483 (AKRLFFDLMGTPAMGVVYGLNADR). A helical transmembrane segment spans residues 484 to 504 (WTLFIGTAIFAFEGIGLIIPV). The Cytoplasmic segment spans residues 505–515 (QDSMRNPEKFP). A helical transmembrane segment spans residues 516–536 (LVLALVILTATILFISIATLG). Residues 537–561 (YLAYGSNVQTVILLNLPQSNIFVNL) lie on the Vacuolar side of the membrane. A helical transmembrane segment spans residues 562 to 582 (IQLFYSIAIMLSTPLQLFPAI). Residues 583-621 (KIIENKFFPKFTKIYVKHDDLTTRVELRPNSGKLNWKIK) are Cytoplasmic-facing. The helical transmembrane segment at 622-642 (WLKNFIRSIIVIIVVSIAYFG) threads the bilayer. Topologically, residues 643–648 (SDNLDK) are vacuolar. The helical transmembrane segment at 649–669 (FVSVIGSLACIPLVYIYPSML) threads the bilayer. At 670 to 692 (HLRGNSLPETKGEFWRFKPMLDT) the chain is on the cytoplasmic side. A helical transmembrane segment spans residues 693-711 (ILIFFGIASMLYTSYQSIF). Residues 712-713 (GV) lie on the Vacuolar side of the membrane.

It belongs to the amino acid/polyamine transporter 2 family.

It localises to the vacuole membrane. Involved in amino acid efflux from the vacuole to the cytoplasm. Capable of transporting large neutral amino acids including tyrosine, glutamine, asparagine, isoleucine and leucine. The polypeptide is Vacuolar amino acid transporter 4 (AVT4) (Saccharomyces cerevisiae (strain ATCC 204508 / S288c) (Baker's yeast)).